Reading from the N-terminus, the 196-residue chain is Adenosylcobinamide-phosphate guanylyltransferase (196 aa).

As to quaternary structure, homodimer.

It carries out the reaction adenosylcob(III)inamide phosphate + GTP + H(+) = adenosylcob(III)inamide-GDP + diphosphate. It functions in the pathway cofactor biosynthesis; adenosylcobalamin biosynthesis. Its function is as follows. Guanylyltransferase that catalyzes the synthesis of adenosylcobinamide-GDP (AdoCbi-GDP) from adenosylcobinamide-phosphate (AdoCbi-P) and GTP. Is involved in adenosylcobalamin biosynthesis. Binds one GTP per dimer. Cannot use other NTPs or GDP. Does not display AdoCbi kinase activity. Is also able to catalyze the condensation of 2-phospho-L-lactate (LP) with GTP in vitro to form PPi and (2S)-lactyl-2-diphospho-5'-guanosine (LPPG), but is much less efficient than CofC, the presumed enzyme catalyzing this reaction in vivo. This Methanocaldococcus jannaschii (strain ATCC 43067 / DSM 2661 / JAL-1 / JCM 10045 / NBRC 100440) (Methanococcus jannaschii) protein is Adenosylcobinamide-phosphate guanylyltransferase (cobY).